The following is a 208-amino-acid chain: MAGIKVFGHPASTATRRVLIALHEKNVDFEFVHVELKDGEHKKEPFILRNPFGKVPAFEDGDFKIFESRAITQYIAHEFSDKGNNLLSTGKDMAIIAMGIEIESHEFDPVGSKLVWEQVLKPLYGMTTDKTVVEEEEAKLAKVLDVYEHRLGESKYLASDHFTLVDLHTIPVIQYLLGTPTKKLFDERPHVSAWVADITSRPSAQKVL.

The GST N-terminal domain occupies 2 to 83 (AGIKVFGHPA…YIAHEFSDKG (82 aa)). Residues 12–13 (ST), 41–42 (HK), 54–55 (KV), and 67–68 (ES) contribute to the glutathione site. Residues 89–208 (TGKDMAIIAM…TSRPSAQKVL (120 aa)) enclose the GST C-terminal domain.

This sequence belongs to the GST superfamily. Phi family.

Its subcellular location is the cytoplasm. The protein resides in the cytosol. The enzyme catalyses RX + glutathione = an S-substituted glutathione + a halide anion + H(+). Its function is as follows. Involved in camalexin biosynthesis by probably catalyzing the conjugation of GSH with indole-3-acetonitrile (IAN). May be involved in the conjugation of reduced glutathione to a wide number of exogenous and endogenous hydrophobic electrophiles and have a detoxification role against certain herbicides. The polypeptide is Glutathione S-transferase F6 (GSTF6) (Arabidopsis thaliana (Mouse-ear cress)).